Reading from the N-terminus, the 627-residue chain is Carene synthase 3, chloroplastic (627 aa).

The transit peptide at 1-36 (MSVISIVPLASKSCLYKSLMSSTHELKALCRPIATL) directs the protein to the chloroplast. Aspartate 378, aspartate 382, and aspartate 530 together coordinate Mg(2+). The DDXXD motif motif lies at 378-382 (DDMYD).

The protein belongs to the terpene synthase family. Tpsd subfamily. The cofactor is Mg(2+). Requires Mn(2+) as cofactor.

It is found in the plastid. The protein resides in the chloroplast. It carries out the reaction (2E)-geranyl diphosphate = (+)-car-3-ene + diphosphate. The protein operates within terpene metabolism; oleoresin biosynthesis. Terpene synthase (TPS) involved in defensive oleoresin formation in conifers in response to insect attack or other injury. The sequence is that of Carene synthase 3, chloroplastic (TPS-3car3) from Picea sitchensis (Sitka spruce).